The sequence spans 1194 residues: Immunoglobulin superfamily member 3 (1194 aa).

A signal peptide spans Met-1 to Ala-19. 8 consecutive Ig-like C2-type domains span residues Gln-20 to Asn-138, Pro-143 to Met-262, Pro-276 to Thr-386, Pro-401 to Thr-539, Phe-545 to Leu-661, Pro-676 to Ser-803, Pro-813 to Thr-945, and Pro-949 to Thr-1097. Topologically, residues Gln-20–Ala-1124 are extracellular. 2 disulfides stabilise this stretch: Cys-42-Cys-120 and Cys-167-Cys-246. Asn-43 carries an N-linked (GlcNAc...) asparagine glycan. An EWI motif motif is present at residues Glu-250 to Ile-252. Cysteines 302 and 376 form a disulfide. Residue Asn-418 is glycosylated (N-linked (GlcNAc...) asparagine). Cystine bridges form between Cys-432–Cys-511, Cys-566–Cys-645, Cys-701–Cys-782, Cys-838–Cys-918, and Cys-974–Cys-1080. Residue Asn-842 is glycosylated (N-linked (GlcNAc...) asparagine). Positions Gly-997–Arg-1030 are disordered. The span at Asp-1007 to Asp-1026 shows a compositional bias: acidic residues. A glycan (N-linked (GlcNAc...) asparagine) is linked at Asn-1077. The chain crosses the membrane as a helical span at residues Leu-1125–Leu-1145. At Leu-1146–Asp-1194 the chain is on the cytoplasmic side.

As to expression, expressed in the lacrimal duct and lacrimal gland.

Its subcellular location is the membrane. The polypeptide is Immunoglobulin superfamily member 3 (Igsf3) (Mus musculus (Mouse)).